Consider the following 177-residue polypeptide: uncharacterized protein (177 aa).

4 consecutive transmembrane segments (helical) span residues 4-24 (IIIL…GFIL), 33-53 (ILSI…LHWI), 80-100 (IAFI…GSFL), and 115-135 (MLGA…LLYV).

The protein localises to the cell membrane. This is an uncharacterized protein from Bacillus subtilis (strain 168).